We begin with the raw amino-acid sequence, 268 residues long: uncharacterized protein (268 aa).

The protein to yeast YKR075c.

This is an uncharacterized protein from Saccharomyces cerevisiae (strain ATCC 204508 / S288c) (Baker's yeast).